We begin with the raw amino-acid sequence, 246 residues long: Thaumatin-like protein 1a (246 aa).

A signal peptide spans 1-24; it reads MMKSQVASLLGLTLAILFFSGAHA. 8 cysteine pairs are disulfide-bonded: Cys-33–Cys-245, Cys-81–Cys-91, Cys-96–Cys-103, Cys-151–Cys-234, Cys-156–Cys-217, Cys-164–Cys-180, Cys-184–Cys-193, and Cys-194–Cys-204.

This sequence belongs to the thaumatin family.

It is found in the secreted. In Malus domestica (Apple), this protein is Thaumatin-like protein 1a (TL1).